A 161-amino-acid polypeptide reads, in one-letter code: Protein-export protein SecB (161 aa).

It belongs to the SecB family. In terms of assembly, homotetramer, a dimer of dimers. One homotetramer interacts with 1 SecA dimer.

The protein resides in the cytoplasm. Functionally, one of the proteins required for the normal export of preproteins out of the cell cytoplasm. It is a molecular chaperone that binds to a subset of precursor proteins, maintaining them in a translocation-competent state. It also specifically binds to its receptor SecA. In Ectopseudomonas mendocina (strain ymp) (Pseudomonas mendocina), this protein is Protein-export protein SecB.